The chain runs to 197 residues: dITP/XTP pyrophosphatase (197 aa).

10-15 is a binding site for substrate; it reads TKNQGK. The active-site Proton acceptor is aspartate 70. Aspartate 70 contributes to the Mg(2+) binding site. Residues serine 71, 151 to 154, lysine 173, and 178 to 179 contribute to the substrate site; these read FGYD and HR.

It belongs to the HAM1 NTPase family. In terms of assembly, homodimer. Mg(2+) serves as cofactor.

It catalyses the reaction XTP + H2O = XMP + diphosphate + H(+). It carries out the reaction dITP + H2O = dIMP + diphosphate + H(+). The enzyme catalyses ITP + H2O = IMP + diphosphate + H(+). Its function is as follows. Pyrophosphatase that catalyzes the hydrolysis of nucleoside triphosphates to their monophosphate derivatives, with a high preference for the non-canonical purine nucleotides XTP (xanthosine triphosphate), dITP (deoxyinosine triphosphate) and ITP. Seems to function as a house-cleaning enzyme that removes non-canonical purine nucleotides from the nucleotide pool, thus preventing their incorporation into DNA/RNA and avoiding chromosomal lesions. The protein is dITP/XTP pyrophosphatase of Symbiobacterium thermophilum (strain DSM 24528 / JCM 14929 / IAM 14863 / T).